Here is a 65-residue protein sequence, read N- to C-terminus: Large ribosomal subunit protein bL35 (65 aa).

It belongs to the bacterial ribosomal protein bL35 family.

The polypeptide is Large ribosomal subunit protein bL35 (Caldicellulosiruptor bescii (strain ATCC BAA-1888 / DSM 6725 / KCTC 15123 / Z-1320) (Anaerocellum thermophilum)).